The sequence spans 419 residues: Imidazolonepropionase (419 aa).

Fe(3+) is bound by residues H82 and H84. Zn(2+) contacts are provided by H82 and H84. Positions 91, 154, and 187 each coordinate 4-imidazolone-5-propanoate. Residue Y154 participates in N-formimidoyl-L-glutamate binding. H252 provides a ligand contact to Fe(3+). Zn(2+) is bound at residue H252. E255 contacts 4-imidazolone-5-propanoate. D326 is a binding site for Fe(3+). D326 serves as a coordination point for Zn(2+). 2 residues coordinate N-formimidoyl-L-glutamate: N328 and G330. S331 contacts 4-imidazolone-5-propanoate.

The protein belongs to the metallo-dependent hydrolases superfamily. HutI family. Zn(2+) is required as a cofactor. Fe(3+) serves as cofactor.

The protein resides in the cytoplasm. It carries out the reaction 4-imidazolone-5-propanoate + H2O = N-formimidoyl-L-glutamate. The protein operates within amino-acid degradation; L-histidine degradation into L-glutamate; N-formimidoyl-L-glutamate from L-histidine: step 3/3. In terms of biological role, catalyzes the hydrolytic cleavage of the carbon-nitrogen bond in imidazolone-5-propanoate to yield N-formimidoyl-L-glutamate. It is the third step in the universal histidine degradation pathway. The sequence is that of Imidazolonepropionase from Clostridium tetani (strain Massachusetts / E88).